The sequence spans 475 residues: UDP-glycosyltransferase 76E1 (475 aa).

The active-site Proton acceptor is the H19. Position 19 (H19) interacts with an anthocyanidin. The Charge relay role is filled by D109. Residues T131, A329, Q331, H346, W349, N350, S351, and E354 each contribute to the UDP-alpha-D-glucose site. A369 provides a ligand contact to an anthocyanidin. Residues D370 and Q371 each coordinate UDP-alpha-D-glucose.

It belongs to the UDP-glycosyltransferase family. Expressed in flowers and fruits.

It is found in the cytoplasm. Its subcellular location is the nucleus. It carries out the reaction 2-cis-(+)-abscisate + UDP-alpha-D-glucose = beta-D-glucopyranosyl cis-(+)-abscisate + UDP. Glucosyltransferase acting on abscisic acid (ABA) but not on auxin (IAA). The polypeptide is UDP-glycosyltransferase 76E1 (Solanum lycopersicum (Tomato)).